The chain runs to 318 residues: (1S)-1,7-diacetoxy-luvungin A aldo-keto reductase (318 aa).

The active-site Proton donor is tyrosine 54.

It belongs to the aldo/keto reductase family. As to expression, expressed in flowers, maturing fruits and in juice vesicles.

It catalyses the reaction (1S)-1,7-diacetoxy-luvungin A + AH2 + H2O = (1R,2R,3S,8R,10R,11R,15S,16S)-3-(acetyloxy)-15-[(4R)-4-[(2S)-3,3-dimethyloxiran-2-yl]-1,4-dihydroxybutan-2-yl]-2,7,7,11,16-pentamethyl-5-oxo-6-oxatetracyclo[9.7.0.0(2,8).0(12,16)]octadec-12-en-10-yl acetate + acetate + A + H(+). It participates in secondary metabolite biosynthesis; terpenoid biosynthesis. Its function is as follows. Aldo-keto reductase involved in the biosynthesis of limonoids triterpene natural products such as limonin, a compound with insecticidal activity responsible for the bitter taste in citrus. Can use (1S)-1,7-diacetoxy-luvungin A as substrate. The chain is (1S)-1,7-diacetoxy-luvungin A aldo-keto reductase from Citrus sinensis (Sweet orange).